A 108-amino-acid polypeptide reads, in one-letter code: UPF0060 membrane protein YnfA (108 aa).

At 1–5 the chain is on the periplasmic side; that stretch reads MLKTT. Residues 6-26 traverse the membrane as a helical segment; it reads LLFFVTALCEIIGCFLPWLWI. Over 27-30 the chain is Cytoplasmic; it reads KRGA. A helical transmembrane segment spans residues 31–51; it reads SVWWLLPAAASLALFVWLLTL. Topologically, residues 52-60 are periplasmic; it reads HPAASGRVY. Residues 61–81 form a helical membrane-spanning segment; sequence AAYGGVYVCTALLWLRVVDGV. The Cytoplasmic portion of the chain corresponds to 82–84; sequence RLT. Residues 85 to 105 form a helical membrane-spanning segment; it reads VYDWSGALIALCGMLIIVVGW. Residues 106-108 are Periplasmic-facing; the sequence is GRT.

The protein belongs to the UPF0060 family.

The protein localises to the cell inner membrane. In Salmonella typhi, this protein is UPF0060 membrane protein YnfA.